A 456-amino-acid polypeptide reads, in one-letter code: tRNA modification GTPase MnmE (456 aa).

(6S)-5-formyl-5,6,7,8-tetrahydrofolate-binding residues include R21, E85, and K124. In terms of domain architecture, TrmE-type G spans 220–379; that stretch reads QLRIVLYGEP…LLDEIQKKAA (160 aa). A K(+)-binding site is contributed by N230. GTP-binding positions include 230 to 235, 249 to 255, and 274 to 277; these read NTGKSS, SEIPGTT, and DTAG. Residue S234 coordinates Mg(2+). Residues S249, I251, and T254 each coordinate K(+). T255 is a Mg(2+) binding site. K456 is a binding site for (6S)-5-formyl-5,6,7,8-tetrahydrofolate.

The protein belongs to the TRAFAC class TrmE-Era-EngA-EngB-Septin-like GTPase superfamily. TrmE GTPase family. In terms of assembly, homodimer. Heterotetramer of two MnmE and two MnmG subunits. The cofactor is K(+).

Its subcellular location is the cytoplasm. Its function is as follows. Exhibits a very high intrinsic GTPase hydrolysis rate. Involved in the addition of a carboxymethylaminomethyl (cmnm) group at the wobble position (U34) of certain tRNAs, forming tRNA-cmnm(5)s(2)U34. This chain is tRNA modification GTPase MnmE, found in Leptospira borgpetersenii serovar Hardjo-bovis (strain JB197).